Consider the following 428-residue polypeptide: Hercynine oxygenase (428 aa).

His-46 lines the Fe cation pocket. A gamma-L-glutamyl-L-cysteine-binding site is contributed by 82–85 (RASR). Fe cation contacts are provided by His-129 and His-133. Residues Asp-411 and Arg-415 each contribute to the gamma-L-glutamyl-L-cysteine site.

Belongs to the EgtB family. Monomer. The cofactor is Fe(2+).

The catalysed reaction is gamma-L-glutamyl-L-cysteine + hercynine + O2 = gamma-L-glutamyl-hercynylcysteine S-oxide + H2O. Its pathway is amino-acid biosynthesis; ergothioneine biosynthesis. Catalyzes the oxidative sulfurization of hercynine (N-alpha,N-alpha,N-alpha-trimethyl-L-histidine) into hercynyl-gamma-L-glutamyl-L-cysteine sulfoxide, a step in the biosynthesis pathway of ergothioneine. Cannot use the alternative thiols cysteine, N-acetylcysteine, or glutathione instead of gamma-glutamylcysteine as substrates, and histidine is a poor sulfur acceptor substrate compared to hercynine. This Mycolicibacterium smegmatis (strain ATCC 700084 / mc(2)155) (Mycobacterium smegmatis) protein is Hercynine oxygenase.